The primary structure comprises 169 residues: Alpha-S2-casein-like B (169 aa).

Residues 1-15 (MKFIILTCLLAVALA) form the signal peptide.

The protein belongs to the alpha-casein family. As to expression, mammary gland specific. Secreted in milk.

Its subcellular location is the secreted. In terms of biological role, important role in the capacity of milk to transport calcium phosphate. This is Alpha-S2-casein-like B (Csn1s2b) from Rattus norvegicus (Rat).